The primary structure comprises 260 residues: Thiazole synthase (260 aa).

The Schiff-base intermediate with DXP role is filled by K100. 1-deoxy-D-xylulose 5-phosphate contacts are provided by residues G161, 187-188 (AG), and 209-210 (NT).

Belongs to the ThiG family. Homotetramer. Forms heterodimers with either ThiH or ThiS.

The protein resides in the cytoplasm. It carries out the reaction [ThiS sulfur-carrier protein]-C-terminal-Gly-aminoethanethioate + 2-iminoacetate + 1-deoxy-D-xylulose 5-phosphate = [ThiS sulfur-carrier protein]-C-terminal Gly-Gly + 2-[(2R,5Z)-2-carboxy-4-methylthiazol-5(2H)-ylidene]ethyl phosphate + 2 H2O + H(+). Its pathway is cofactor biosynthesis; thiamine diphosphate biosynthesis. In terms of biological role, catalyzes the rearrangement of 1-deoxy-D-xylulose 5-phosphate (DXP) to produce the thiazole phosphate moiety of thiamine. Sulfur is provided by the thiocarboxylate moiety of the carrier protein ThiS. In vitro, sulfur can be provided by H(2)S. This Sorangium cellulosum (strain So ce56) (Polyangium cellulosum (strain So ce56)) protein is Thiazole synthase.